Here is a 92-residue protein sequence, read N- to C-terminus: Alpha-conotoxin-like Mi20.1 (92 aa).

Residues 1 to 24 (MPKLEMMLLVLLILPLSSFSAAGE) form the signal peptide. The propeptide occupies 25-45 (QVVQGDRRSDGLARYLQRGGR). Glutamate 49 bears the 4-carboxyglutamate mark. Proline 55 carries the 4-hydroxyproline modification. 4 disulfide bridges follow: cysteine 63–cysteine 72, cysteine 68–cysteine 80, cysteine 73–cysteine 90, and cysteine 78–cysteine 92.

This sequence belongs to the conotoxin D superfamily. As to quaternary structure, hetero-, homo- or pseudo-homodimer (identical sequence, different post-translational modifications). One pseudo-homodimer of [carboxyGlu-49, hydroxyPro-55]Ml20.1 and [carboxyGlu-49, hydroxyPro-55, hydroxyPro-70]Ml20.1 may exist. As to expression, expressed by the venom duct.

It localises to the secreted. Alpha-conotoxins act on postsynaptic membranes, they bind to the nicotinic acetylcholine receptors (nAChR) and thus inhibit them. Through its two C-terminal domains, this homodimeric protein would bind to two nAChR allosteric sites, located outside the nAChR C-loop of the principal binding face and at the adjacent binding interface in a clockwise direction. This toxin specifically blocks mammalian neuronal nAChR of the alpha-7/CHRNA7, alpha-3-beta-2/CHRNA3-CHRNB2 and alpha-4-beta-2/CHRNA4-CHRNB2 subtypes. In Conus miles (Soldier cone), this protein is Alpha-conotoxin-like Mi20.1.